Consider the following 1322-residue polypeptide: Chitin synthase chs-1 (1322 aa).

Topologically, residues 1–39 are extracellular; that stretch reads MNDGENYWNAFRSHKRSATDGPTLSPWMVTVLQATKLLL. The chain crosses the membrane as a helical span at residues 40 to 60; that stretch reads FALCNIVLTLGSVFSKLIVLI. The Cytoplasmic portion of the chain corresponds to 61 to 128; it reads MATNIVPRAH…KGQCGQLVKS (68 aa). Residues 129-149 form a helical membrane-spanning segment; that stretch reads VVVLESLRAIGLAVLSFHVFP. The Extracellular segment spans residues 150-156; that stretch reads QLDLARC. The helical transmembrane segment at 157–177 threads the bilayer; that stretch reads LVLSACFPLVAVLQRSLVAMV. Residues 178–193 are Cytoplasmic-facing; it reads SAARTGRSFRNRLGRC. Residues 194-214 traverse the membrane as a helical segment; the sequence is FVAIPHVIMFLVLMSSCYVWA. Topologically, residues 215-221 are extracellular; the sequence is LFDNKFT. Residues 222–242 traverse the membrane as a helical segment; the sequence is AIIALPIGVICTSAGFWESWI. The Cytoplasmic segment spans residues 243–269; that stretch reads DTTHSGTSFDELYRLKYAVRKMNTTTK. Residues 270 to 290 form a helical membrane-spanning segment; that stretch reads LIVSLMRIVCTVSVLVSAVYI. Residues 291–316 lie on the Extracellular side of the membrane; the sequence is NDHKKLNSSHFVKAFFSFSTRQPHTR. N-linked (GlcNAc...) asparagine glycosylation occurs at asparagine 297. Residues 317 to 337 traverse the membrane as a helical segment; it reads LLLLATGIIVLHFVMRGISRF. Topologically, residues 338–342 are cytoplasmic; the sequence is LAALD. The chain crosses the membrane as a helical span at residues 343–363; sequence LHPFSFVHPLSIAPLIAYGYV. At 364–396 the chain is on the extracellular side; the sequence is RYACQSPTCSIARRLARFGLHWVCDQWFQSARG. Residues 397-417 form a helical membrane-spanning segment; that stretch reads IASPDFYICLIWLLVGCYRGW. Residues 418–836 are Cytoplasmic-facing; that stretch reads RLVRQRYFDT…AISYAYIAYQ (419 aa). The stretch at 455 to 486 forms a coiled coil; sequence LNRQEKTMLTEEEDISDENDELRIRNDEVDRV. The chain crosses the membrane as a helical span at residues 837-857; it reads FLVIFFSMLGPAIIFTMLVFA. The Extracellular segment spans residues 858–865; it reads QVAAFELR. The helical transmembrane segment at 866–886 threads the bilayer; that stretch reads GSDVMLYNGIPIGFFIVLCFT. Topologically, residues 887 to 892 are cytoplasmic; that stretch reads TESNIQ. The helical transmembrane segment at 893–913 threads the bilayer; the sequence is LIYAKYMSIAYAFVMLAVLVA. Topologically, residues 914–922 are extracellular; that stretch reads TSSQIVLET. Residues 923 to 943 form a helical membrane-spanning segment; that stretch reads VLAPTSLFIVTMVGIFFFAAC. Topologically, residues 944–951 are cytoplasmic; the sequence is LHPKEFTN. A helical membrane pass occupies residues 952–972; it reads IIHGVVFFLMIPSTYVFLTLY. Residues 973–1148 lie on the Extracellular side of the membrane; the sequence is SLINLNVITW…AVAEGLASLR (176 aa). The stretch at 1019–1053 forms a coiled coil; the sequence is ISCREKKEHEERREKMEKKMQRMELALRSIESGAD. A helical membrane pass occupies residues 1149–1169; sequence NQIAFTILLVNSLLALAIFLI. At 1170–1209 the chain is on the cytoplasmic side; it reads QKHKNVLSIKFSPIKNFRWTKMNEMTGQYEETDEPLKIDP. The chain crosses the membrane as a helical span at residues 1210–1230; the sequence is LGMGIVVFLLIILFVQTLGML. The Extracellular portion of the chain corresponds to 1231-1322; sequence LHRLNTMIGA…MQRSALSTTE (92 aa).

It belongs to the chitin synthase family. Class IV subfamily.

The protein localises to the cell membrane. It carries out the reaction [(1-&gt;4)-N-acetyl-beta-D-glucosaminyl](n) + UDP-N-acetyl-alpha-D-glucosamine = [(1-&gt;4)-N-acetyl-beta-D-glucosaminyl](n+1) + UDP + H(+). Essential for the embryonic synthesis of chitin, a component of the eggshell. The sequence is that of Chitin synthase chs-1 from Caenorhabditis elegans.